We begin with the raw amino-acid sequence, 209 residues long: NADH-ubiquinone oxidoreductase subunit 9 (209 aa).

The protein belongs to the complex I 30 kDa subunit family. In terms of assembly, complex I is composed of about 30 different subunits.

It is found in the mitochondrion inner membrane. It catalyses the reaction a ubiquinone + NADH + 5 H(+)(in) = a ubiquinol + NAD(+) + 4 H(+)(out). In terms of biological role, core subunit of the mitochondrial membrane respiratory chain NADH dehydrogenase (Complex I) that is believed to belong to the minimal assembly required for catalysis. Complex I functions in the transfer of electrons from NADH to the respiratory chain. The immediate electron acceptor for the enzyme is believed to be ubiquinone. This Paramecium primaurelia protein is NADH-ubiquinone oxidoreductase subunit 9 (NAD9).